The chain runs to 352 residues: DNA polymerase IV (352 aa).

The 181-residue stretch at 6-186 (IIHIDMDAFY…LPLGKIPGVG (181 aa)) folds into the UmuC domain. Positions 10 and 104 each coordinate Mg(2+). Residue Glu105 is part of the active site.

This sequence belongs to the DNA polymerase type-Y family. As to quaternary structure, monomer. It depends on Mg(2+) as a cofactor.

Its subcellular location is the cytoplasm. The catalysed reaction is DNA(n) + a 2'-deoxyribonucleoside 5'-triphosphate = DNA(n+1) + diphosphate. In terms of biological role, poorly processive, error-prone DNA polymerase involved in untargeted mutagenesis. Copies undamaged DNA at stalled replication forks, which arise in vivo from mismatched or misaligned primer ends. These misaligned primers can be extended by PolIV. Exhibits no 3'-5' exonuclease (proofreading) activity. May be involved in translesional synthesis, in conjunction with the beta clamp from PolIII. In Neisseria meningitidis serogroup A / serotype 4A (strain DSM 15465 / Z2491), this protein is DNA polymerase IV.